The primary structure comprises 222 residues: Eukaryotic translation initiation factor 3 subunit K (222 aa).

The PCI domain occupies 46-208 (YDLEANLAVL…KIKTKNITEK (163 aa)).

Belongs to the eIF-3 subunit K family. As to quaternary structure, component of the eukaryotic translation initiation factor 3 (eIF-3) complex. The eIF-3 complex interacts with pix.

The protein localises to the cytoplasm. Functionally, component of the eukaryotic translation initiation factor 3 (eIF-3) complex, which is involved in protein synthesis of a specialized repertoire of mRNAs and, together with other initiation factors, stimulates binding of mRNA and methionyl-tRNAi to the 40S ribosome. The eIF-3 complex specifically targets and initiates translation of a subset of mRNAs involved in cell proliferation. In Drosophila ananassae (Fruit fly), this protein is Eukaryotic translation initiation factor 3 subunit K.